A 595-amino-acid chain; its full sequence is Laccase-18 (595 aa).

Residues 1-29 form the signal peptide; the sequence is MEKLSTAASLFCVVVAATALAMAVVGGEA. 2 consecutive Plastocyanin-like domains span residues 37–153 and 162–316; these read MVHE…PRNG and KDVP…YAGA. N-linked (GlcNAc...) asparagine glycans are attached at residues N42 and N48. The Cu cation site is built by H87 and H89. N121 is a glycosylation site (N-linked (GlcNAc...) asparagine). Cu cation contacts are provided by H132 and H134. N-linked (GlcNAc...) asparagine glycans are attached at residues N206, N345, N382, N402, N409, N439, and N470. Residues 429–571 enclose the Plastocyanin-like 3 domain; sequence DFPVRPPRPF…ATAFIVEDGP (143 aa). Cu cation is bound by residues N488, H491, H493, H550, C551, H552, H556, and M561. The interval 570 to 595 is disordered; the sequence is GPTPETSLPPPPPEFKRCGTNGLSQP.

It belongs to the multicopper oxidase family. Requires Cu cation as cofactor.

The protein localises to the secreted. The protein resides in the extracellular space. Its subcellular location is the apoplast. It carries out the reaction 4 hydroquinone + O2 = 4 benzosemiquinone + 2 H2O. Its function is as follows. Lignin degradation and detoxification of lignin-derived products. The chain is Laccase-18 (LAC18) from Oryza sativa subsp. japonica (Rice).